The primary structure comprises 342 residues: MTRGLTYSLTELATAIGATVQGDGDCKIHNVAAIAQAQPGEISFVTDRKYRKYLTQTKASAILLDEKLASRCPINALVMSNPKLGFAKLLTLLRPQSLPTGGIHPTAVVGANCQIDPSAHIGAHVVIEEDVVIGPRTLIGAGASIGRGSQIGSDCCLHSRVTLYSQTRIGDRSIIHSGAVIGADGFGLIQDEKGEWVKIPQVGRVIIGDDVEIGANATIDRGALDDTVIGNGVKIDDLVMIAHNVRIGDHTVIAGCAGVAGSTTVGRHCMIGASAGLNGHIEICDNVIITGMGMIQKSITKPGIYSSGTGMQTNREWRKSVIRFWQLDELAKRLKRLEKLIR.

Histidine 243 (proton acceptor) is an active-site residue.

It belongs to the transferase hexapeptide repeat family. LpxD subfamily. Homotrimer.

It carries out the reaction a UDP-3-O-[(3R)-3-hydroxyacyl]-alpha-D-glucosamine + a (3R)-hydroxyacyl-[ACP] = a UDP-2-N,3-O-bis[(3R)-3-hydroxyacyl]-alpha-D-glucosamine + holo-[ACP] + H(+). It functions in the pathway bacterial outer membrane biogenesis; LPS lipid A biosynthesis. Its function is as follows. Catalyzes the N-acylation of UDP-3-O-acylglucosamine using 3-hydroxyacyl-ACP as the acyl donor. Is involved in the biosynthesis of lipid A, a phosphorylated glycolipid that anchors the lipopolysaccharide to the outer membrane of the cell. The sequence is that of UDP-3-O-acylglucosamine N-acyltransferase from Coxiella burnetii (strain CbuK_Q154) (Coxiella burnetii (strain Q154)).